A 383-amino-acid polypeptide reads, in one-letter code: tRNA-specific 2-thiouridylase MnmA (383 aa).

ATP-binding positions include 29-36 and Met-55; that span reads GMSGGVDS. Positions 115–117 are interaction with target base in tRNA; it reads NPD. Cys-120 serves as the catalytic Nucleophile. The cysteines at positions 120 and 217 are disulfide-linked. Position 145 (Gly-145) interacts with ATP. The tract at residues 167–169 is interaction with tRNA; it reads KDQ. Catalysis depends on Cys-217, which acts as the Cysteine persulfide intermediate. Positions 329 to 330 are interaction with tRNA; that stretch reads RY.

It belongs to the MnmA/TRMU family.

It localises to the cytoplasm. It catalyses the reaction S-sulfanyl-L-cysteinyl-[protein] + uridine(34) in tRNA + AH2 + ATP = 2-thiouridine(34) in tRNA + L-cysteinyl-[protein] + A + AMP + diphosphate + H(+). In terms of biological role, catalyzes the 2-thiolation of uridine at the wobble position (U34) of tRNA, leading to the formation of s(2)U34. The protein is tRNA-specific 2-thiouridylase MnmA of Histophilus somni (strain 129Pt) (Haemophilus somnus).